The chain runs to 315 residues: Methionyl-tRNA formyltransferase (315 aa).

Residues 2-189 form an N-terminal domain region; the sequence is SESLRIIFAG…LITTLKQLAD (188 aa). 113–116 contacts (6S)-5,6,7,8-tetrahydrofolate; the sequence is SLLP. The interval 210-315 is C-terminal domain; that stretch reads KEEARIDWSL…EWFVPGNRLV (106 aa).

Belongs to the Fmt family. In terms of assembly, monomer.

It catalyses the reaction L-methionyl-tRNA(fMet) + (6R)-10-formyltetrahydrofolate = N-formyl-L-methionyl-tRNA(fMet) + (6S)-5,6,7,8-tetrahydrofolate + H(+). Activity is optimum in the presence of Mg(2+) and K(+). Its function is as follows. Attaches a formyl group to the free amino group of methionyl-tRNA(fMet). The formyl group appears to play a dual role in the initiator identity of N-formylmethionyl-tRNA by promoting its recognition by IF2 and preventing the misappropriation of this tRNA by the elongation apparatus. This chain is Methionyl-tRNA formyltransferase, found in Escherichia coli (strain K12).